Consider the following 922-residue polypeptide: GPI inositol-deacylase (922 aa).

The Cytoplasmic segment spans residues 1–11 (MFLHSVNLWNL). A helical membrane pass occupies residues 12-32 (AFYVFMVFLATLGLWDVFFGF). Residues 33-597 (EENKCSMSYM…GQVVRFHGGA (565 aa)) lie on the Lumenal side of the membrane. The active site involves Ser174. N-linked (GlcNAc...) asparagine glycans are attached at residues Asn363, Asn402, and Asn558. A helical membrane pass occupies residues 598-618 (LPAYVVSSILLAYGGQLYSLL). At 619 to 641 (STGFCLEYGTMLDKEAKPYKVDP) the chain is on the cytoplasmic side. Residues 642 to 662 (FVIMIKFLLGYKWFKELWDAV) traverse the membrane as a helical segment. Topologically, residues 663–668 (LLPELD) are lumenal. A helical membrane pass occupies residues 669-689 (AIVLTSQSMCFPLVSLILFLF). Topologically, residues 690-694 (GTCTA) are cytoplasmic. A helical transmembrane segment spans residues 695–715 (YWSGLLSSASVQLLSSLWLAL). Residues 716 to 733 (KRPAELPKDVKVMSPDLP) are Lumenal-facing. The helical transmembrane segment at 734 to 754 (VLTVVFLIISWTTCGALAILL) threads the bilayer. Residues 755–816 (SYLYYVFKVV…NDAEDSLRMH (62 aa)) are Cytoplasmic-facing. Positions 776-801 (NQPVNPKHSRRSEKKSNHHKDSAIQN) are disordered. Over residues 782–793 (KHSRRSEKKSNH) the composition is skewed to basic residues. Residues 817 to 837 (STVINLLTWVVLLSMPSLIYW) traverse the membrane as a helical segment. Over 838–853 (SKNLRYYFKLNPDPCK) the chain is Lumenal. Residues 854-874 (PLAFLLIPAIAVLGNTHTVSI) form a helical membrane-spanning segment. Residues 875 to 894 (KSSKLLKTASQFPLPLAVGV) are Cytoplasmic-facing. The chain crosses the membrane as a helical span at residues 895–915 (IAFGSSHLYRVPCFVIIPLVF). The Lumenal segment spans residues 916–922 (HSLCNFM).

It belongs to the GPI inositol-deacylase family.

The protein localises to the endoplasmic reticulum membrane. GPI inositol-deacylase that catalyzes the remove of the acyl chain linked to the 2-OH position of inositol ring from the GPI-anchored protein (GPI-AP) in the endoplasmic reticulum. Initiates the post-attachment remodeling phase of GPI-AP biogenesis and participates in endoplasmic reticulum (ER)-to-Golgi transport of GPI-anchored protein. This chain is GPI inositol-deacylase, found in Rattus norvegicus (Rat).